A 190-amino-acid polypeptide reads, in one-letter code: Bifunctional D-Ala-D-Ala dipeptidase and D-Ala-D-Ala carboxypeptidase VanXYC (190 aa).

Position 66 (Glu-66) interacts with Mg(2+). Residues Gln-67, Ala-88, Ser-93, His-95, and Asp-102 each coordinate a dipeptide. Residues His-95 and Asp-102 each coordinate Cu(2+). Zn(2+) contacts are provided by His-95 and Asp-102. Glu-153 serves as the catalytic catalytic acid/base residue. A dipeptide contacts are provided by Trp-155 and His-156. His-156 provides a ligand contact to Cu(2+). His-156 lines the Zn(2+) pocket.

Belongs to the peptidase M15D family. Homodimer.

The protein resides in the cytoplasm. It carries out the reaction D-alanyl-D-alanine + H2O = 2 D-alanine. It catalyses the reaction UDP-N-acetyl-alpha-D-muramoyl-L-alanyl-gamma-D-glutamyl-L-lysyl-D-alanyl-D-alanine + H2O = UDP-N-acetyl-alpha-D-muramoyl-L-alanyl-gamma-D-glutamyl-L-lysyl-D-alanine + D-alanine. In terms of biological role, bifunctional enzyme, exhibiting dipeptidase and carboxypeptidase activities. Catalyzes hydrolysis of the D-alanyl-D-alanine dipeptide. Cleaves the C-terminal D-alanine residue of UDP-muramyl-pentapeptide[Ala] (UDP-MurNAc-L-Ala-D-Glu-L-Lys-D-Ala-D-Ala). Shows no activity against the pentapeptide with a C-terminal D-serine residue. Together with VanC/VanC1 and VanT, required for vancomycin resistance in E.gallinarum strain BM4174. The sequence is that of Bifunctional D-Ala-D-Ala dipeptidase and D-Ala-D-Ala carboxypeptidase VanXYC from Enterococcus gallinarum.